The sequence spans 86 residues: Kappa-theraphotoxin-Cg1c (86 aa).

The first 21 residues, 1 to 21 (MKVSVLITLAVLGVMFVWASA), serve as a signal peptide directing secretion. Positions 22 to 50 (AELEERGSDHRDSPAWLKSMERIFQSEER) are excised as a propeptide. Cystine bridges form between Cys-52-Cys-66, Cys-59-Cys-71, and Cys-65-Cys-78.

Belongs to the neurotoxin 10 (Hwtx-1) family. 28 (Jztx-11) subfamily. Expressed by the venom gland.

Its subcellular location is the secreted. Probable ion channel inhibitor. The chain is Kappa-theraphotoxin-Cg1c from Chilobrachys guangxiensis (Chinese earth tiger tarantula).